The following is a 509-amino-acid chain: Steroid 17-alpha-hydroxylase/17,20 lyase (509 aa).

Cysteine 440 serves as a coordination point for heme.

This sequence belongs to the cytochrome P450 family. Heme is required as a cofactor.

The protein resides in the endoplasmic reticulum membrane. The protein localises to the microsome membrane. It catalyses the reaction a C21-steroid + reduced [NADPH--hemoprotein reductase] + O2 = a 17alpha-hydroxy-C21-steroid + oxidized [NADPH--hemoprotein reductase] + H2O + H(+). It carries out the reaction progesterone + reduced [NADPH--hemoprotein reductase] + O2 = 17alpha-hydroxyprogesterone + oxidized [NADPH--hemoprotein reductase] + H2O + H(+). The catalysed reaction is pregnenolone + reduced [NADPH--hemoprotein reductase] + O2 = 17alpha-hydroxypregnenolone + oxidized [NADPH--hemoprotein reductase] + H2O + H(+). The enzyme catalyses 17alpha-hydroxyprogesterone + reduced [NADPH--hemoprotein reductase] + O2 = androst-4-ene-3,17-dione + acetate + oxidized [NADPH--hemoprotein reductase] + H2O + 2 H(+). It catalyses the reaction 17alpha-hydroxyprogesterone + reduced [NADPH--hemoprotein reductase] + O2 = 16alpha,17alpha-dihydroxyprogesterone + oxidized [NADPH--hemoprotein reductase] + H2O + H(+). It carries out the reaction 16alpha,17alpha-dihydroxyprogesterone + reduced [NADPH--hemoprotein reductase] + O2 = 6beta,16alpha,17alpha-trihydroxyprogesterone + oxidized [NADPH--hemoprotein reductase] + H2O + H(+). The catalysed reaction is 17alpha-hydroxypregnenolone + reduced [NADPH--hemoprotein reductase] + O2 = 3beta-hydroxyandrost-5-en-17-one + acetate + oxidized [NADPH--hemoprotein reductase] + H2O + 2 H(+). The enzyme catalyses 16alpha,17alpha-dihydroxypregnenolone + reduced [NADPH--hemoprotein reductase] + O2 = 3beta,16alpha-dihydroxy-androst-5-en-17-one + acetate + oxidized [NADPH--hemoprotein reductase] + H2O + 2 H(+). It catalyses the reaction 3beta-hydroxyandrost-5-en-17-one + reduced [NADPH--hemoprotein reductase] + O2 = 3beta,16alpha-dihydroxy-androst-5-en-17-one + oxidized [NADPH--hemoprotein reductase] + H2O + H(+). It carries out the reaction androst-4-ene-3,17-dione + reduced [NADPH--hemoprotein reductase] + O2 = 16alpha-hydroxyandrost-4-ene-3,17-dione + oxidized [NADPH--hemoprotein reductase] + H2O + H(+). It participates in steroid hormone biosynthesis. The protein operates within steroid biosynthesis; glucocorticoid biosynthesis. Regulated predominantly by intracellular cAMP levels. The 17,20-lyase activity is stimulated by cytochrome b5, which acts as an allosteric effector increasing the Vmax of the lyase activity. Its function is as follows. A cytochrome P450 monooxygenase involved in corticoid and androgen biosynthesis. Catalyzes 17-alpha hydroxylation of C21 steroids, which is common for both pathways. A second oxidative step, required only for androgen synthesis, involves an acyl-carbon cleavage. The 17-alpha hydroxy intermediates, as part of adrenal glucocorticoids biosynthesis pathway, are precursors of cortisol. Hydroxylates steroid hormones, pregnenolone and progesterone to form 17-alpha hydroxy metabolites, followed by the cleavage of the C17-C20 bond to form C19 steroids, dehydroepiandrosterone (DHEA) and androstenedione. Has 16-alpha hydroxylase activity. Catalyzes 16-alpha hydroxylation of 17-alpha hydroxy pregnenolone, followed by the cleavage of the C17-C20 bond to form 16-alpha-hydroxy DHEA. Also 16-alpha hydroxylates androgens, relevant for estriol synthesis. Mechanistically, uses molecular oxygen inserting one oxygen atom into a substrate, and reducing the second into a water molecule, with two electrons provided by NADPH via cytochrome P450 reductase (CPR; NADPH-ferrihemoprotein reductase). This is Steroid 17-alpha-hydroxylase/17,20 lyase (Cyp17a1) from Peromyscus leucopus (White-footed mouse).